Consider the following 558-residue polypeptide: Formate--tetrahydrofolate ligase (558 aa).

66–73 lines the ATP pocket; the sequence is TPAGEGKT.

This sequence belongs to the formate--tetrahydrofolate ligase family.

It carries out the reaction (6S)-5,6,7,8-tetrahydrofolate + formate + ATP = (6R)-10-formyltetrahydrofolate + ADP + phosphate. It participates in one-carbon metabolism; tetrahydrofolate interconversion. This chain is Formate--tetrahydrofolate ligase, found in Clostridium kluyveri (strain NBRC 12016).